The following is a 419-amino-acid chain: Tyrosine--tRNA ligase (419 aa).

Residue tyrosine 34 participates in L-tyrosine binding. A 'HIGH' region motif is present at residues proline 39–asparagine 48. Residues tyrosine 169 and glutamine 173 each coordinate L-tyrosine. The short motif at lysine 230–threonine 234 is the 'KMSKS' region element. An ATP-binding site is contributed by lysine 233. Residues valine 352 to alanine 419 enclose the S4 RNA-binding domain.

This sequence belongs to the class-I aminoacyl-tRNA synthetase family. TyrS type 1 subfamily. As to quaternary structure, homodimer.

It is found in the cytoplasm. The enzyme catalyses tRNA(Tyr) + L-tyrosine + ATP = L-tyrosyl-tRNA(Tyr) + AMP + diphosphate + H(+). In terms of biological role, catalyzes the attachment of tyrosine to tRNA(Tyr) in a two-step reaction: tyrosine is first activated by ATP to form Tyr-AMP and then transferred to the acceptor end of tRNA(Tyr). This chain is Tyrosine--tRNA ligase, found in Bacillus caldotenax.